We begin with the raw amino-acid sequence, 338 residues long: Fructose-1,6-bisphosphatase 1 (338 aa).

Residue A2 is modified to N-acetylalanine. AMP-binding positions include 18-22 (VMEEG) and 28-32 (TGEMT). The Mg(2+) site is built by D69 and E98. 113–114 (KY) provides a ligand contact to AMP. D119, L121, and D122 together coordinate Mg(2+). 122–125 (DGSS) contacts substrate. Position 141 (R141) interacts with AMP. N6-succinyllysine is present on K151. Residues 213–216 (NEGY), 244–249 (RYVGSM), Y265, and 275–277 (KLR) each bind substrate. 3 positions are modified to phosphotyrosine: Y216, Y245, and Y265. E281 lines the Mg(2+) pocket.

The protein belongs to the FBPase class 1 family. In terms of assembly, homotetramer. Mg(2+) serves as cofactor.

It catalyses the reaction beta-D-fructose 1,6-bisphosphate + H2O = beta-D-fructose 6-phosphate + phosphate. Its pathway is carbohydrate biosynthesis; gluconeogenesis. Its activity is regulated as follows. Subject to complex allosteric regulation. The enzyme can assume an active R-state, or an inactive T-state. Intermediate conformations may exist. AMP acts as an allosteric inhibitor. AMP binding affects the turnover of bound substrate and not the affinity for substrate. Fructose 2,6-bisphosphate acts as a competitive inhibitor. Fructose 2,6-bisphosphate and AMP have synergistic effects. Its function is as follows. Catalyzes the hydrolysis of fructose 1,6-bisphosphate to fructose 6-phosphate in the presence of divalent cations, acting as a rate-limiting enzyme in gluconeogenesis. Plays a role in regulating glucose sensing and insulin secretion of pancreatic beta-cells. Appears to modulate glycerol gluconeogenesis in liver. Important regulator of appetite and adiposity; increased expression of the protein in liver after nutrient excess increases circulating satiety hormones and reduces appetite-stimulating neuropeptides and thus seems to provide a feedback mechanism to limit weight gain. This chain is Fructose-1,6-bisphosphatase 1 (FBP1), found in Oryctolagus cuniculus (Rabbit).